Reading from the N-terminus, the 139-residue chain is Lymphocyte antigen 6H (139 aa).

An N-terminal signal peptide occupies residues 1–25 (MLPAAMKSLGLALLALLLCPSPAHG). Residues 26-113 (LWCQDCTLAN…CEKDLCNGAS (88 aa)) form the UPAR/Ly6 domain. Cystine bridges form between cysteine 28–cysteine 51, cysteine 31–cysteine 39, cysteine 44–cysteine 72, cysteine 76–cysteine 103, and cysteine 104–cysteine 109. Residue asparagine 35 is glycosylated (N-linked (GlcNAc...) asparagine). A lipid anchor (GPI-anchor amidated asparagine) is attached at asparagine 110. A propeptide spans 111-139 (GASVAGRSPWALAGGLLLSLGPALLWAGP) (removed in mature form).

Interacts with CHRNA4 and CHRNA7. As to expression, strongly expressed in brain, also found in lower levels in eye and reproductive tissues.

The protein localises to the cell membrane. Functionally, believed to act as modulator of nicotinic acetylcholine receptors (nAChRs) activity. In vitro inhibits alpha-3:beta-4-containing nAChRs maximum response. In vitro inhibits alpha-3:beta-4-containing nAChRs maximum response. May play a role in the intracellular trafficking of alpha-7-containing nAChRs and may inhibit their expression at the cell surface. Seems to inhibit alpha-7/CHRNA7 signaling in hippocampal neurons. The protein is Lymphocyte antigen 6H (Ly6h) of Mus musculus (Mouse).